Here is a 21-residue protein sequence, read N- to C-terminus: Cupiennin-6a (21 aa).

Residue Ser-21 is modified to Serine amide.

As to expression, expressed by the venom gland.

The protein localises to the secreted. The protein is Cupiennin-6a of Cupiennius salei (American wandering spider).